Consider the following 221-residue polypeptide: Protein N-terminal glutamine amidohydrolase (221 aa).

Ser-2 carries the N-acetylserine modification. Active-site residues include Cys-23, His-79, and Asp-97.

It belongs to the NTAQ1 family. In terms of assembly, monomer.

It carries out the reaction N-terminal L-glutaminyl-[protein] + H2O = N-terminal L-glutamyl-[protein] + NH4(+). Mediates the side-chain deamidation of N-terminal glutamine residues to glutamate, an important step in N-end rule pathway of protein degradation. Conversion of the resulting N-terminal glutamine to glutamate renders the protein susceptible to arginylation, polyubiquitination and degradation as specified by the N-end rule. Does not act on substrates with internal or C-terminal glutamine and does not act on non-glutamine residues in any position. Involved in immune response. Controls the expression of specific defense-response genes, activates the synthesis pathway for the phytoalexin camalexin, and influences basal resistance to the hemibiotroph pathogen Pseudomonas syringae pv tomato (Pst). This Arabidopsis thaliana (Mouse-ear cress) protein is Protein N-terminal glutamine amidohydrolase.